The sequence spans 483 residues: Spermatogenesis-defective protein 39 homolog (483 aa).

It belongs to the SPE39 family. Interacts with vps33b. As to expression, high levels detected in liver and small intestine of larvae at 5 days post-fertilization.

It is found in the cytoplasm. Its subcellular location is the cytoplasmic vesicle. The protein resides in the early endosome. It localises to the recycling endosome. The protein localises to the late endosome. In terms of biological role, proposed to be involved in endosomal maturation implicating in part vps33b. In epithelial cells, the vps33b:vipas39 complex may play a role in the apical rab11a-dependent recycling pathway and in the maintenance of the apical-basolateral polarity. May play a role in lysosomal trafficking, probably via association with the core HOPS complex in a discrete population of endosomes; the functions seems to be independent of vps33b. May play a role in vesicular trafficking during spermatogenesis. May be involved in direct or indirect transcriptional regulation of E-cadherin. This is Spermatogenesis-defective protein 39 homolog (vipas39) from Danio rerio (Zebrafish).